A 61-amino-acid polypeptide reads, in one-letter code: MAKKSMIAKQKRPAKFSTREYNRCKICGRPHGYLKKYGICRICFRELAYKGEIPGVRKASW.

Residues Cys24, Cys27, Cys40, and Cys43 each coordinate Zn(2+).

This sequence belongs to the universal ribosomal protein uS14 family. Zinc-binding uS14 subfamily. Part of the 30S ribosomal subunit. Contacts proteins S3 and S10. The cofactor is Zn(2+).

Its function is as follows. Binds 16S rRNA, required for the assembly of 30S particles and may also be responsible for determining the conformation of the 16S rRNA at the A site. This Finegoldia magna (strain ATCC 29328 / DSM 20472 / WAL 2508) (Peptostreptococcus magnus) protein is Small ribosomal subunit protein uS14.